Consider the following 398-residue polypeptide: Acetate kinase (398 aa).

Asn9 is a Mg(2+) binding site. Lys16 provides a ligand contact to ATP. Arg89 serves as a coordination point for substrate. Asp146 acts as the Proton donor/acceptor in catalysis. Residues 206–210 (HLGNG), 281–283 (DCR), and 329–333 (GIGEN) contribute to the ATP site. Glu384 contacts Mg(2+).

It belongs to the acetokinase family. As to quaternary structure, homodimer. Mg(2+) serves as cofactor. Mn(2+) is required as a cofactor.

It is found in the cytoplasm. The catalysed reaction is acetate + ATP = acetyl phosphate + ADP. The protein operates within metabolic intermediate biosynthesis; acetyl-CoA biosynthesis; acetyl-CoA from acetate: step 1/2. Its function is as follows. Catalyzes the formation of acetyl phosphate from acetate and ATP. Can also catalyze the reverse reaction. The sequence is that of Acetate kinase from Vibrio campbellii (strain ATCC BAA-1116).